The sequence spans 256 residues: MANNEEHPPRGNEWEVVSLTSSAYAAAPGPYNVESRDVRKYDAYYGAETSRDLYMSEHFVFPPSEHENLPIDESLFVAEQRKDGRDLMLEGQGLSDQFHYEAGNNQQSIYGESALGSSRHMESFGSESAVYEHGLVDAEGNLDLHSDGEGEKDVKKSTHNLPCEAWWKRRAISMYSRTREANAIWSLFFAAAVTGLVVLGQRWQQERWQVLQLKWQSSISSEKLGRVLEPLSRLKDVIVRSNPQASLVRSGSSSEV.

Residues Trp-14–Val-17 carry the AIM (Atg8-family-interacting motif) motif. Residues Ala-181–Gly-200 form a helical membrane-spanning segment. The short motif at Trp-208–Leu-211 is the AIM (Atg8-family-interacting motif) element.

As to quaternary structure, interacts with ATG8F. Interacts with ATG8H. Interacts with APE1 and PSBS/NPQ4.

The protein resides in the endoplasmic reticulum membrane. It localises to the membrane. The protein localises to the plastid. Its subcellular location is the chloroplast membrane. Functionally, involved in a special stress-induced plastid-to-vacuole protein trafficking pathway. Interacts with ATG8F in plastid bodies to subsequently enable their delivery to the vacuole by an autophagic pathway. Interacts with the plastid proteins APE1 and PSBS/NPQ4 and may recruit them as cargo into plastid bodies that may be recognized by the autophagy machinery for degradation in the vacuole. Involved in the alleviation of damage caused by salt stress during plant development, probably through its involvement in plastid-to-vacuole and ER-to-vacuole trafficking. Plays a role in seed germination in response to exogenous abscisic acid (ABA) treatment. The protein is ATG8-interacting protein 1 of Arabidopsis thaliana (Mouse-ear cress).